The primary structure comprises 159 residues: 2-C-methyl-D-erythritol 2,4-cyclodiphosphate synthase (159 aa).

Positions 10 and 12 each coordinate a divalent metal cation. 4-CDP-2-C-methyl-D-erythritol 2-phosphate-binding positions include 10–12 (DVH) and 36–37 (HS). Position 44 (His-44) interacts with a divalent metal cation. Residues 58–60 (DIG), 63–67 (FPDTD), 102–108 (AQAPKMA), 134–137 (TTTE), Phe-141, 141–144 (FTGR), and Arg-144 each bind 4-CDP-2-C-methyl-D-erythritol 2-phosphate.

This sequence belongs to the IspF family. In terms of assembly, homotrimer. Requires a divalent metal cation as cofactor.

It catalyses the reaction 4-CDP-2-C-methyl-D-erythritol 2-phosphate = 2-C-methyl-D-erythritol 2,4-cyclic diphosphate + CMP. It functions in the pathway isoprenoid biosynthesis; isopentenyl diphosphate biosynthesis via DXP pathway; isopentenyl diphosphate from 1-deoxy-D-xylulose 5-phosphate: step 4/6. In terms of biological role, involved in the biosynthesis of isopentenyl diphosphate (IPP) and dimethylallyl diphosphate (DMAPP), two major building blocks of isoprenoid compounds. Catalyzes the conversion of 4-diphosphocytidyl-2-C-methyl-D-erythritol 2-phosphate (CDP-ME2P) to 2-C-methyl-D-erythritol 2,4-cyclodiphosphate (ME-CPP) with a corresponding release of cytidine 5-monophosphate (CMP). This Shewanella oneidensis (strain ATCC 700550 / JCM 31522 / CIP 106686 / LMG 19005 / NCIMB 14063 / MR-1) protein is 2-C-methyl-D-erythritol 2,4-cyclodiphosphate synthase.